Here is a 433-residue protein sequence, read N- to C-terminus: MSSRKTKSNAHAECLSQVQRILRERFCHHSPHSNLFGVQVQYKHLIELLKRTAIYGESNSVLIVGPRGSGKTTLLNHALKELMEIEVSENVIQVHLNGLLQTNEKIALKEITRQLNLDNVVEDKVFGSFAENLSFLLEALQKGDRTSSCPVIFILDEFDIFAHQKNQTLLYNLFDISQSAQTPVAVIGLTCRLDILELLEKRVKSRFSHRQIHLMNSFDFPQYLKIFKEQLSLPAEFPDKAFAERWNENVHCLSEDSTVLEVLQKHFSVNKNLQSLHMLLMLALNRVTVSHPFMTSADLMEAQHMCSLDSKANIVHGLSVLEICLIIAMKHLNDIYEEEPFNFQMVYNEFQKFIQRKAHSVYNFEKPVVMKAFEHLQQLELIKPVERTSVNSQREYQLVKLLLDNTQIMNALQKYSNCPTDVRQWATSSLSWL.

Lysine 7 bears the N6-methyllysine mark. Glycine 65–threonine 72 lines the ATP pocket.

The protein belongs to the ORC4 family. Component of ORC, a complex composed of at least 6 subunits: ORC1, ORC2, ORC3, ORC4, ORC5 and ORC6. ORC is regulated in a cell-cycle dependent manner. It is sequentially assembled at the exit from anaphase of mitosis and disassembled as cells enter S phase. Interacts with DBF4. Interacts with POLQ.

The protein localises to the nucleus. In terms of biological role, binds histone H3 and H4 trimethylation marks H3K9me3, H3K27me3 and H4K20me3. Component of the origin recognition complex (ORC) that binds origins of replication. DNA-binding is ATP-dependent. The specific DNA sequences that define origins of replication have not been identified yet. ORC is required to assemble the pre-replication complex necessary to initiate DNA replication. This chain is Origin recognition complex subunit 4 (Orc4), found in Mus musculus (Mouse).